The following is a 268-amino-acid chain: 3-deoxy-manno-octulosonate cytidylyltransferase (268 aa).

Belongs to the KdsB family.

Its subcellular location is the cytoplasm. The catalysed reaction is 3-deoxy-alpha-D-manno-oct-2-ulosonate + CTP = CMP-3-deoxy-beta-D-manno-octulosonate + diphosphate. The protein operates within nucleotide-sugar biosynthesis; CMP-3-deoxy-D-manno-octulosonate biosynthesis; CMP-3-deoxy-D-manno-octulosonate from 3-deoxy-D-manno-octulosonate and CTP: step 1/1. Its pathway is bacterial outer membrane biogenesis; lipopolysaccharide biosynthesis. Activates KDO (a required 8-carbon sugar) for incorporation into bacterial lipopolysaccharide in Gram-negative bacteria. The sequence is that of 3-deoxy-manno-octulosonate cytidylyltransferase from Ralstonia nicotianae (strain ATCC BAA-1114 / GMI1000) (Ralstonia solanacearum).